We begin with the raw amino-acid sequence, 216 residues long: Adenylate kinase (216 aa).

10–15 (GAGKGT) provides a ligand contact to ATP. The segment at 30–59 (STGDIFRKNISENTPLGIEAKGYIDNGQLV) is NMP. AMP is bound by residues threonine 31, arginine 36, 57 to 59 (QLV), 85 to 88 (GFPR), and glutamine 92. An LID region spans residues 126–163 (GRRVCPSCGASYHVKFNPPTNEGKCDLCGSEVIQRKDD). Arginine 127 lines the ATP pocket. Zn(2+) is bound by residues cysteine 130 and cysteine 133. Residue 136–137 (SY) participates in ATP binding. Positions 150 and 153 each coordinate Zn(2+). Positions 160 and 171 each coordinate AMP. Residue lysine 199 participates in ATP binding.

Belongs to the adenylate kinase family. In terms of assembly, monomer.

It is found in the cytoplasm. It carries out the reaction AMP + ATP = 2 ADP. It functions in the pathway purine metabolism; AMP biosynthesis via salvage pathway; AMP from ADP: step 1/1. In terms of biological role, catalyzes the reversible transfer of the terminal phosphate group between ATP and AMP. Plays an important role in cellular energy homeostasis and in adenine nucleotide metabolism. This Clostridium beijerinckii (strain ATCC 51743 / NCIMB 8052) (Clostridium acetobutylicum) protein is Adenylate kinase.